The following is a 544-amino-acid chain: Protein adenylyltransferase (544 aa).

The Fido domain maps to 63–216 (FDTAYLCHIH…LEPMQHLFED (154 aa)). ATP contacts are provided by residues 93–94 (FA), 106–107 (RT), 163–167 (EGNGR), and Arg-170.

The protein localises to the secreted. It catalyses the reaction L-tyrosyl-[protein] + ATP = O-(5'-adenylyl)-L-tyrosyl-[protein] + diphosphate. The catalysed reaction is L-threonyl-[protein] + ATP = 3-O-(5'-adenylyl)-L-threonyl-[protein] + diphosphate. Functionally, adenylyltransferase involved in virulence by mediating the addition of adenosine 5'-monophosphate (AMP) to specific residue of host target proteins. The polypeptide is Protein adenylyltransferase (bepA) (Bartonella henselae (strain ATCC 49882 / DSM 28221 / CCUG 30454 / Houston 1) (Rochalimaea henselae)).